The chain runs to 56 residues: Large ribosomal subunit protein bL33 (56 aa).

The protein belongs to the bacterial ribosomal protein bL33 family.

This chain is Large ribosomal subunit protein bL33, found in Beutenbergia cavernae (strain ATCC BAA-8 / DSM 12333 / CCUG 43141 / JCM 11478 / NBRC 16432 / NCIMB 13614 / HKI 0122).